The chain runs to 428 residues: MAITYLKKSPKTSSTDDTKTTGIVQDLLKNIETTKEQGCIDLTKKFDKYDGEIIVSKERIEEIKKTLDQKTKDDVQFSYERVRKFAEAQLKNYGQDFEVELSDGLFAGQKLIPVNTAGCYVPGGRYAHIASAVMSVTTAKVAGVKNVIACSPPKEGVGAHPTIIYTADLCGADVILNLGGVPAIAAMTNGLFNNPPADIIVGPGNQFVAEAKRILFGKVGIDLFAGPTEIGIIADAKADPEIVAVDLVGQAEHGYNSPCWLYTTSKELAEKVMKRVPELIAELPEVPRTNADAAWRDYGEVILCDTDEEMATISDEYAPEHLEVQTENLEWFHKRLTNYGSLFIGEETTVAYGDKCSGTNHILPTKGAGRYTGGLFVGKFVKTLSFQRMTKESTELVGAAAARISRYEGMEAHARTGDVRLKKYGYSS.

Zn(2+)-binding residues include Gln250 and His253. Catalysis depends on proton acceptor residues Glu320 and His321. Positions 354 and 413 each coordinate Zn(2+).

This sequence belongs to the histidinol dehydrogenase family. It depends on Zn(2+) as a cofactor.

In Pelagibacter ubique (strain HTCC1062), this protein is Histidinol dehydrogenase homolog.